We begin with the raw amino-acid sequence, 84 residues long: Short neurotoxin SNTX-1 (84 aa).

The signal sequence occupies residues 1–21 (MKTLLLILVVVTIVCLDLVCC). Intrachain disulfides connect C25–C46, C39–C63, C65–C76, and C77–C82.

This sequence belongs to the three-finger toxin family. Short-chain subfamily. Type I alpha-neurotoxin sub-subfamily. In terms of tissue distribution, expressed by the venom gland.

The protein localises to the secreted. Binds to muscle nicotinic acetylcholine receptor (nAChR) and inhibit acetylcholine from binding to the receptor, thereby impairing neuromuscular transmission. This Demansia vestigiata (Lesser black whip snake) protein is Short neurotoxin SNTX-1.